A 159-amino-acid polypeptide reads, in one-letter code: 6,7-dimethyl-8-ribityllumazine synthase (159 aa).

5-amino-6-(D-ribitylamino)uracil-binding positions include phenylalanine 23, alanine 58–glutamate 60, and threonine 82–isoleucine 84. Histidine 90 (proton donor) is an active-site residue. Leucine 115 provides a ligand contact to 5-amino-6-(D-ribitylamino)uracil. Position 129 (arginine 129) interacts with (2S)-2-hydroxy-3-oxobutyl phosphate.

This sequence belongs to the DMRL synthase family. In terms of assembly, forms an icosahedral capsid composed of 60 subunits, arranged as a dodecamer of pentamers.

It catalyses the reaction (2S)-2-hydroxy-3-oxobutyl phosphate + 5-amino-6-(D-ribitylamino)uracil = 6,7-dimethyl-8-(1-D-ribityl)lumazine + phosphate + 2 H2O + H(+). It participates in cofactor biosynthesis; riboflavin biosynthesis; riboflavin from 2-hydroxy-3-oxobutyl phosphate and 5-amino-6-(D-ribitylamino)uracil: step 1/2. Functionally, catalyzes the formation of 6,7-dimethyl-8-ribityllumazine by condensation of 5-amino-6-(D-ribitylamino)uracil with 3,4-dihydroxy-2-butanone 4-phosphate. This is the penultimate step in the biosynthesis of riboflavin. The chain is 6,7-dimethyl-8-ribityllumazine synthase from Blochmanniella floridana.